A 114-amino-acid chain; its full sequence is Large ribosomal subunit protein bL20c (114 aa).

It belongs to the bacterial ribosomal protein bL20 family.

It localises to the plastid. It is found in the chloroplast. Binds directly to 23S ribosomal RNA and is necessary for the in vitro assembly process of the 50S ribosomal subunit. It is not involved in the protein synthesizing functions of that subunit. The polypeptide is Large ribosomal subunit protein bL20c (rpl20) (Trieres chinensis (Marine centric diatom)).